Reading from the N-terminus, the 158-residue chain is Histone H2B.1 (158 aa).

An N6-acetyllysine mark is found at Lys7 and Lys25. Disordered stretches follow at residues 26–45 (AAAGKDGKAGIMTPKKPKKG) and 135–158 (VHNFESETSKKNSQGRKRGRGQQT). The segment covering 135–144 (VHNFESETSK) has biased composition (basic and acidic residues). The segment covering 147-158 (SQGRKRGRGQQT) has biased composition (basic residues).

The protein belongs to the histone H2B family. In terms of assembly, the nucleosome is a histone octamer containing two molecules each of H2A, H2B, H3 and H4 assembled in one H3-H4 heterotetramer and two H2A-H2B heterodimers. The octamer wraps approximately 147 bp of DNA. In terms of processing, can be acetylated to form H2BK6ac and H2BK33ac. In terms of tissue distribution, expressed in the generative cell within the bicellular pollen. Not detected in other reproductive or vegetative tissues.

It localises to the nucleus. Its subcellular location is the chromosome. Functionally, core component of nucleosome. Nucleosomes wrap and compact DNA into chromatin, limiting DNA accessibility to the cellular machineries which require DNA as a template. Histones thereby play a central role in transcription regulation, DNA repair, DNA replication and chromosomal stability. DNA accessibility is regulated via a complex set of post-translational modifications of histones, also called histone code, and nucleosome remodeling. This Lilium longiflorum (Trumpet lily) protein is Histone H2B.1.